We begin with the raw amino-acid sequence, 347 residues long: tRNA pseudouridine synthase D (347 aa).

The active-site Nucleophile is D81. Positions 158-304 (GVPNYFGNQR…MRHDRRAIAL (147 aa)) constitute a TRUD domain.

The protein belongs to the pseudouridine synthase TruD family.

The enzyme catalyses uridine(13) in tRNA = pseudouridine(13) in tRNA. Responsible for synthesis of pseudouridine from uracil-13 in transfer RNAs. This Vibrio vulnificus (strain CMCP6) protein is tRNA pseudouridine synthase D.